Consider the following 115-residue polypeptide: Large ribosomal subunit protein bL20c (115 aa).

This sequence belongs to the bacterial ribosomal protein bL20 family.

It localises to the plastid. Its subcellular location is the chloroplast. Binds directly to 23S ribosomal RNA and is necessary for the in vitro assembly process of the 50S ribosomal subunit. It is not involved in the protein synthesizing functions of that subunit. The chain is Large ribosomal subunit protein bL20c (rpl20) from Cyanidium caldarium (Red alga).